Consider the following 77-residue polypeptide: Conotoxin PnMKLT1-0122 (77 aa).

A signal peptide spans 1-22; that stretch reads MKLTCMMIVAVLFLTAWTFATA. The propeptide occupies 23–49; it reads EDPRNGLENLFSKAHHEMKNPEDSKLN. 3 disulfides stabilise this stretch: Cys52–Cys67, Cys59–Cys71, and Cys66–Cys76.

It belongs to the conotoxin O1 superfamily. In terms of tissue distribution, expressed by the venom duct.

The protein resides in the secreted. The sequence is that of Conotoxin PnMKLT1-0122 from Conus pennaceus (Feathered cone).